Reading from the N-terminus, the 859-residue chain is Volume-regulated anion channel subunit LRRC8D (859 aa).

Over 1 to 22 the chain is Cytoplasmic; the sequence is MFTLAEVASLNDIQPTYRILKP. Residues 23-48 traverse the membrane as a helical segment; sequence WWDVFMDYLAVVMLMVAIFAGTMQLT. Over 49–164 the chain is Extracellular; the sequence is KDQVVCLPVL…YHLALPWYSK (116 aa). Cys-54 and Cys-355 are disulfide-bonded. A disordered region spans residues 110–138; the sequence is IPLQATHPHAESTLPNQEAKKEKRDPTGR. The segment covering 127 to 138 has biased composition (basic and acidic residues); it reads EAKKEKRDPTGR. A helical membrane pass occupies residues 165–183; the sequence is YFPYLALIHTIILMVSSNF. Topologically, residues 184 to 309 are cytoplasmic; it reads WFKYPKTCSK…EDSDLIYKLY (126 aa). The disordered stretch occupies residues 222–252; that stretch reads SEENKQRITGAQTLPKHVSTSSDEGSPSAST. The span at 228-252 shows a compositional bias: polar residues; sequence RITGAQTLPKHVSTSSDEGSPSAST. Ser-242, Ser-243, and Ser-247 each carry phosphoserine. A helical transmembrane segment spans residues 310–331; sequence VVQTLIKTAKFIFILCYTANFV. The Extracellular segment spans residues 332-361; sequence NAISFEHVCKPKVEHLTGYEVFECTHNMAY. The chain crosses the membrane as a helical span at residues 362 to 387; sequence MLKKLLISYISIICVYGFICLYTLFW. Over 388–859 the chain is Cytoplasmic; the sequence is LFRIPLKEYS…DVNVPFANGI (472 aa). LRR repeat units follow at residues 515–535, 539–560, 562–583, 590–610, 613–633, 637–658, 660–681, 685–706, 708–729, 731–752, 754–775, 777–798, and 800–821; these read NLQE…AFSF, HLRC…VYLL, NLRE…IGLE, HLKI…ITDV, HLTK…NSLK, NVAE…IFSL, NLQE…ISFQ, RLTC…ITHV, NLES…VFSL, KLRC…IGLL, NLQH…LFKC, KLRT…ISQL, and QLTQ…LGQC.

It belongs to the LRRC8 family. As to quaternary structure, heterohexamer; oligomerizes with other LRRC8 proteins (LRRC8A, LRRC8B, LRRC8C and/or LRRC8E) to form a heterohexamer. In vivo, the subunit composition may depend primarily on expression levels, and heterooligomeric channels containing various proportions of the different LRRC8 proteins may coexist. As to expression, expressed in pancreatic beta cells. Also expressed in glucagon-secreting pancreatic alpha cells.

It is found in the cell membrane. The protein localises to the endoplasmic reticulum membrane. It carries out the reaction chloride(in) = chloride(out). It catalyses the reaction iodide(out) = iodide(in). The enzyme catalyses taurine(out) = taurine(in). Functionally, non-essential component of the volume-regulated anion channel (VRAC, also named VSOAC channel), an anion channel required to maintain a constant cell volume in response to extracellular or intracellular osmotic changes. The VRAC channel conducts iodide better than chloride and can also conduct organic osmolytes like taurine. Plays a redundant role in the efflux of amino acids, such as aspartate, in response to osmotic stress family member (LRRC8B, LRRC8C, LRRC8D or LRRC8E); channel characteristics depend on the precise subunit composition. Also acts as a regulator of glucose-sensing in pancreatic beta cells: VRAC currents, generated in response to hypotonicity- or glucose-induced beta cell swelling, depolarize cells, thereby causing electrical excitation, leading to increase glucose sensitivity and insulin secretion. VRAC channels containing LRRC8D inhibit transport of immunoreactive cyclic dinucleotide GMP-AMP (2'-3'-cGAMP), an immune messenger produced in response to DNA virus in the cytosol. This chain is Volume-regulated anion channel subunit LRRC8D, found in Mus musculus (Mouse).